Reading from the N-terminus, the 124-residue chain is Large ribosomal subunit protein bL17 (124 aa).

It belongs to the bacterial ribosomal protein bL17 family. As to quaternary structure, part of the 50S ribosomal subunit. Contacts protein L32.

In Trichlorobacter lovleyi (strain ATCC BAA-1151 / DSM 17278 / SZ) (Geobacter lovleyi), this protein is Large ribosomal subunit protein bL17.